Reading from the N-terminus, the 187-residue chain is Prepronociceptin (187 aa).

Positions 1–19 (MKILFCDVLLLSLLSSVFS) are cleaved as a signal peptide. Positions 20–95 (SCPRDCLTCQ…QPKASEMQHL (76 aa)) are excised as a propeptide. 3 tandem repeats follow at residues 109 to 114 (DAEPGA), 115 to 120 (DAEPGA), and 121 to 126 (DAEPGA). A 3 X 6 AA tandem repeats of D-A-E-P-G-A region spans residues 109–126 (DAEPGADAEPGADAEPGA). The interval 109 to 133 (DAEPGADAEPGADAEPGADDAEEVE) is disordered. A compositionally biased stretch (acidic residues) spans 112–131 (PGADAEPGADAEPGADDAEE). The propeptide occupies 180–187 (TLHQNGNV).

This sequence belongs to the opioid neuropeptide precursor family. In terms of processing, specific enzymatic cleavages at paired basic residues probably yield other active peptides besides nociceptin. The N-terminal domain contains 6 conserved cysteines thought to be involved in disulfide bonding and/or processing. In terms of tissue distribution, brain and spinal cord. Low levels in kidney and spleen.

The protein resides in the secreted. Its function is as follows. Ligand of the opioid receptor-like receptor OPRL1. It may act as a transmitter in the brain by modulating nociceptive and locomotor behavior. May be involved in neuronal differentiation and development. When administered intracerebroventricularly, nociceptin induces hyperalgesia and decreases locomotor activity. Blocks nociceptin action in pain transmission by inhibiting nociceptin-induced hyperalgesia and allodynia. Functionally, has potent analgesic activity. The polypeptide is Prepronociceptin (Pnoc) (Mus musculus (Mouse)).